Reading from the N-terminus, the 362-residue chain is 3-dehydroquinate synthase (362 aa).

Residues 71–76, 105–109, 129–130, K142, K151, and 169–172 each bind NAD(+); these read DGEQYK, GVVGD, TT, and CLKT. The Zn(2+) site is built by E184, H247, and H264.

It belongs to the sugar phosphate cyclases superfamily. Dehydroquinate synthase family. NAD(+) is required as a cofactor. Requires Co(2+) as cofactor. The cofactor is Zn(2+).

It localises to the cytoplasm. It catalyses the reaction 7-phospho-2-dehydro-3-deoxy-D-arabino-heptonate = 3-dehydroquinate + phosphate. It functions in the pathway metabolic intermediate biosynthesis; chorismate biosynthesis; chorismate from D-erythrose 4-phosphate and phosphoenolpyruvate: step 2/7. Functionally, catalyzes the conversion of 3-deoxy-D-arabino-heptulosonate 7-phosphate (DAHP) to dehydroquinate (DHQ). The protein is 3-dehydroquinate synthase of Escherichia coli O157:H7.